We begin with the raw amino-acid sequence, 90 residues long: Translation initiation factor IF-1 2 (90 aa).

The S1-like domain occupies 1 to 72 (MAKEELLELD…TKGRINFRHK (72 aa)).

The protein belongs to the IF-1 family. In terms of assembly, component of the 30S ribosomal translation pre-initiation complex which assembles on the 30S ribosome in the order IF-2 and IF-3, IF-1 and N-formylmethionyl-tRNA(fMet); mRNA recruitment can occur at any time during PIC assembly.

It localises to the cytoplasm. Functionally, one of the essential components for the initiation of protein synthesis. Stabilizes the binding of IF-2 and IF-3 on the 30S subunit to which N-formylmethionyl-tRNA(fMet) subsequently binds. Helps modulate mRNA selection, yielding the 30S pre-initiation complex (PIC). Upon addition of the 50S ribosomal subunit IF-1, IF-2 and IF-3 are released leaving the mature 70S translation initiation complex. This is Translation initiation factor IF-1 2 from Paraburkholderia xenovorans (strain LB400).